An 89-amino-acid chain; its full sequence is Small ribosomal subunit protein uS17 (89 aa).

The protein belongs to the universal ribosomal protein uS17 family. As to quaternary structure, part of the 30S ribosomal subunit.

In terms of biological role, one of the primary rRNA binding proteins, it binds specifically to the 5'-end of 16S ribosomal RNA. The protein is Small ribosomal subunit protein uS17 of Stenotrophomonas maltophilia (strain K279a).